The chain runs to 417 residues: Gamma-glutamyl phosphate reductase (417 aa).

Belongs to the gamma-glutamyl phosphate reductase family.

Its subcellular location is the cytoplasm. The catalysed reaction is L-glutamate 5-semialdehyde + phosphate + NADP(+) = L-glutamyl 5-phosphate + NADPH + H(+). It functions in the pathway amino-acid biosynthesis; L-proline biosynthesis; L-glutamate 5-semialdehyde from L-glutamate: step 2/2. In terms of biological role, catalyzes the NADPH-dependent reduction of L-glutamate 5-phosphate into L-glutamate 5-semialdehyde and phosphate. The product spontaneously undergoes cyclization to form 1-pyrroline-5-carboxylate. The polypeptide is Gamma-glutamyl phosphate reductase (Serratia marcescens).